We begin with the raw amino-acid sequence, 80 residues long: Mitotic-spindle organizing protein 1 (80 aa).

This sequence belongs to the MOZART1 family. Part of the gamma-tubulin complex.

Its subcellular location is the cytoplasm. The protein localises to the cytoskeleton. It is found in the microtubule organizing center. The protein resides in the spindle pole body. In terms of biological role, required for gamma-tubulin complex recruitment to the microtubule organizing center (MTOC). The polypeptide is Mitotic-spindle organizing protein 1 (Pyricularia oryzae (strain 70-15 / ATCC MYA-4617 / FGSC 8958) (Rice blast fungus)).